The following is a 64-amino-acid chain: Small hydrophobic protein (64 aa).

The segment at 6 to 15 (ITIEFSSKFW) is interaction with host BCAP31. Residues 20–40 (LIHMITTIISLLIIISIMTAI) traverse the membrane as a helical segment. The interval 38 to 43 (TAILNK) is interaction with small-molecule inhibitor. Asn52 carries N-linked (GlcNAc...) asparagine; by host glycosylation.

The protein belongs to the orthopneumovirus small hydrophobic protein family. Homopentamer forming a funnel-like pore. Interacts with glycoprotein G; this interaction occurs on the surface of virion particles and infected cells. Interacts with host BCAP31 (via C-terminus); this interaction is direct. Four species of SH have been detected in infected cell cytoplasm: a 7.5 kDa non-glycosylated form (SH0), a 13-15 kDa form that contains one or two N-linked carbohydrate side chains of the high-mannose type (SHg), a 21-30 kDa polylactosaminoglycan-modified form of the protein (SHp), and the isoform generated by alternative translational initiation. Of these different forms, SH0 is by far the most abundant protein detected during virus infection. Post-translationally, tyrosine phosphorylated.

The protein resides in the virion membrane. It is found in the host cell membrane. The protein localises to the host Golgi apparatus membrane. Its subcellular location is the host endoplasmic reticulum membrane. With respect to regulation, channel activity is inhibited by copper. Also inhibited by small-molecule pyronin B. Viroporin that forms a homopentameric ion channel displaying low ion selectivity. May play a role in virus morphogenesis and pathogenicity at various stages of the viral life cycle. Accumulates at the membrane of the Golgi apparatus in infected cells and may facilitate virus release by modifying the secretory pathway. May enhance host membrane permeability and disrupt cellular ion homeostasis, which can be sensed as damage-associated molecular patterns/danger signals, triggering NLRP3 inflammasome activation and inflammatory immune response. Also inhibits host TNFA-mediated signaling pathway and may delay apoptosis, allowing time for the virus to replicate. This is Small hydrophobic protein (SH) from Homo sapiens (Human).